The sequence spans 670 residues: uncharacterized protein (670 aa).

The disordered stretch occupies residues 53–83 (PTAKPSDFPGDAVTGTQPVPREPSSLPRTTP). A run of 27 repeats spans residues 143–158 (ATPA…TTAT), 171–186 (ATPA…TTAT), 200–214 (ATPA…TTTP), 215–233 (ATPA…TTTP), 234–252 (AMPA…TTTP), 253–268 (AMPA…TTAT), 279–293 (TMPA…TTTP), 294–309 (AMPT…TTAT), 320–334 (TMPA…TTTP), 335–349 (AMPA…VTKP), 362–376 (AMPT…TTTP), 377–391 (AMPT…TTTP), 392–406 (AMPT…TTTP), 407–421 (AKPA…TTTP), 422–436 (AMPA…TTAP), 437–452 (ATPA…TKPT), 464–477 (VKPT…TTTT), 478–493 (AKPT…TKPT), 504–517 (AKPT…TVAT), 518–531 (AKPT…TTTT), 532–545 (AKPT…TTTT), 546–559 (AKPT…TTTT), 560–573 (AKPT…TTTT), 574–587 (AKPA…TTTT), 588–601 (AKPA…TTTT), 602–615 (AKPA…TTTT), and 616–629 (AKPA…TTTT). Positions 187-225 (PAGANDTAVTTTSATPAGANDTAVTTTPATPAGANDTAN) are disordered. Over residues 205 to 225 (ANDTAVTTTPATPAGANDTAN) the composition is skewed to low complexity. The segment at 339 to 395 (GANDTANVTKPAGSTDTVVTTTPAMPTGATDTVVTTTPAMPTGATDTVVTTTPAMPT) is disordered. Over residues 342–362 (DTANVTKPAGSTDTVVTTTPA) the composition is skewed to polar residues. Positions 363 to 395 (MPTGATDTVVTTTPAMPTGATDTVVTTTPAMPT) are enriched in low complexity. Low complexity-rich tracts occupy residues 471 to 482 (GTVTTTTAKPTG) and 490 to 503 (TKPT…TTTT). Residues 471–503 (GTVTTTTAKPTGANDTANVTKPTGATGTVTTTT) are disordered. Residues 525–634 (GTVTTTTAKP…VTTTTAKPAG (110 aa)) show a composition bias toward low complexity. The interval 525–670 (GTVTTTTAKP…GHKPKSGARR (146 aa)) is disordered. Basic residues predominate over residues 638 to 654 (GHGHGHGHGHGHGHGHG).

This is an uncharacterized protein from Ictalurid herpesvirus 1 (strain Auburn) (IcHV-1).